We begin with the raw amino-acid sequence, 273 residues long: Shikimate dehydrogenase (NADP(+)) (273 aa).

Shikimate contacts are provided by residues 15-17 (SKS) and threonine 62. Lysine 66 acts as the Proton acceptor in catalysis. Residue aspartate 78 participates in NADP(+) binding. Shikimate-binding residues include asparagine 87 and aspartate 103. NADP(+) is bound by residues 127–131 (GAGGA), 150–155 (NRTHTR), alanine 218, and glycine 238.

The protein belongs to the shikimate dehydrogenase family. As to quaternary structure, homodimer.

The enzyme catalyses shikimate + NADP(+) = 3-dehydroshikimate + NADPH + H(+). Its pathway is metabolic intermediate biosynthesis; chorismate biosynthesis; chorismate from D-erythrose 4-phosphate and phosphoenolpyruvate: step 4/7. Functionally, involved in the biosynthesis of the chorismate, which leads to the biosynthesis of aromatic amino acids. Catalyzes the reversible NADPH linked reduction of 3-dehydroshikimate (DHSA) to yield shikimate (SA). The polypeptide is Shikimate dehydrogenase (NADP(+)) (Yersinia pseudotuberculosis serotype O:1b (strain IP 31758)).